We begin with the raw amino-acid sequence, 147 residues long: Nucleoside diphosphate kinase (147 aa).

Residues Lys-9, Arg-85, Thr-91, Arg-102, and Asn-112 each coordinate ATP. His-115 serves as the catalytic Pros-phosphohistidine intermediate.

This sequence belongs to the NDK family. Mg(2+) serves as cofactor.

The enzyme catalyses a 2'-deoxyribonucleoside 5'-diphosphate + ATP = a 2'-deoxyribonucleoside 5'-triphosphate + ADP. The catalysed reaction is a ribonucleoside 5'-diphosphate + ATP = a ribonucleoside 5'-triphosphate + ADP. Major role in the synthesis of nucleoside triphosphates other than ATP. The ATP gamma phosphate is transferred to the NDP beta phosphate via a ping-pong mechanism, using a phosphorylated active-site intermediate. The sequence is that of Nucleoside diphosphate kinase (NDK1) from Encephalitozoon cuniculi (strain GB-M1) (Microsporidian parasite).